The following is a 192-amino-acid chain: UPF0312 protein PputGB1_5030 (192 aa).

A signal peptide spans 1-23; that stretch reads MLKKTFAALALGTALLSAGQAMA.

This sequence belongs to the UPF0312 family. Type 1 subfamily.

It is found in the periplasm. In Pseudomonas putida (strain GB-1), this protein is UPF0312 protein PputGB1_5030.